The primary structure comprises 77 residues: Acyl carrier protein (77 aa).

Residues Met1–Glu76 form the Carrier domain. O-(pantetheine 4'-phosphoryl)serine is present on Ser36.

Belongs to the acyl carrier protein (ACP) family. Post-translationally, 4'-phosphopantetheine is transferred from CoA to a specific serine of apo-ACP by AcpS. This modification is essential for activity because fatty acids are bound in thioester linkage to the sulfhydryl of the prosthetic group.

The protein resides in the cytoplasm. The protein operates within lipid metabolism; fatty acid biosynthesis. Carrier of the growing fatty acid chain in fatty acid biosynthesis. The polypeptide is Acyl carrier protein (Staphylococcus carnosus (strain TM300)).